Reading from the N-terminus, the 336-residue chain is Cytosolic 5'-nucleotidase 3A (336 aa).

The Nucleophile role is filled by Asp88. Positions 88 and 90 each coordinate Mg(2+). Asp90 (proton donor) is an active-site residue. CMP is bound at residue Glu135. Residues Glu135 and Ser156 each contribute to the N(7)-methyl-GMP site. Substrate contacts are provided by residues 203-204 (SA) and Lys252. Asp277 lines the Mg(2+) pocket. Position 278 is a phosphoserine (Ser278).

It belongs to the pyrimidine 5'-nucleotidase family. Monomer. Isoforms 1, 3 and 4 are expressed in reticulocytes. Isoform 4 is hardly detectable in bone marrow and fetal liver.

Its subcellular location is the cytoplasm. It localises to the endoplasmic reticulum. It carries out the reaction N(7)-methyl-GMP + H2O = N(7)-methylguanosine + phosphate. It catalyses the reaction CMP + H2O = cytidine + phosphate. The catalysed reaction is a ribonucleoside 5'-phosphate + H2O = a ribonucleoside + phosphate. Its function is as follows. Nucleotidase which shows specific activity towards cytidine monophosphate (CMP) and 7-methylguanosine monophosphate (m(7)GMP). CMP seems to be the preferred substrate. This chain is Cytosolic 5'-nucleotidase 3A (NT5C3A), found in Homo sapiens (Human).